Reading from the N-terminus, the 274-residue chain is Shikimate dehydrogenase (NADP(+)) (274 aa).

Residues 14–16 and T61 each bind shikimate; that span reads SKS. K65 acts as the Proton acceptor in catalysis. Positions 86 and 102 each coordinate shikimate. NADP(+) contacts are provided by residues 126–130, 150–155, and M214; these read GAGGA and NRTAEK. Shikimate is bound at residue Y216. Residue G239 participates in NADP(+) binding.

It belongs to the shikimate dehydrogenase family. In terms of assembly, homodimer.

It catalyses the reaction shikimate + NADP(+) = 3-dehydroshikimate + NADPH + H(+). The protein operates within metabolic intermediate biosynthesis; chorismate biosynthesis; chorismate from D-erythrose 4-phosphate and phosphoenolpyruvate: step 4/7. Its function is as follows. Involved in the biosynthesis of the chorismate, which leads to the biosynthesis of aromatic amino acids. Catalyzes the reversible NADPH linked reduction of 3-dehydroshikimate (DHSA) to yield shikimate (SA). This Pseudoalteromonas translucida (strain TAC 125) protein is Shikimate dehydrogenase (NADP(+)).